The following is a 422-amino-acid chain: UDP-N-acetylglucosamine 1-carboxyvinyltransferase (422 aa).

Phosphoenolpyruvate is bound at residue 22-23 (KN). UDP-N-acetyl-alpha-D-glucosamine is bound at residue arginine 93. Catalysis depends on cysteine 117, which acts as the Proton donor. Cysteine 117 bears the 2-(S-cysteinyl)pyruvic acid O-phosphothioketal mark. UDP-N-acetyl-alpha-D-glucosamine is bound by residues 122-126 (RPVDQ), aspartate 309, and isoleucine 331.

The protein belongs to the EPSP synthase family. MurA subfamily.

It localises to the cytoplasm. The enzyme catalyses phosphoenolpyruvate + UDP-N-acetyl-alpha-D-glucosamine = UDP-N-acetyl-3-O-(1-carboxyvinyl)-alpha-D-glucosamine + phosphate. The protein operates within cell wall biogenesis; peptidoglycan biosynthesis. Functionally, cell wall formation. Adds enolpyruvyl to UDP-N-acetylglucosamine. The protein is UDP-N-acetylglucosamine 1-carboxyvinyltransferase of Delftia acidovorans (strain DSM 14801 / SPH-1).